The following is a 310-amino-acid chain: 4-hydroxy-3-methylbut-2-enyl diphosphate reductase (310 aa).

A [4Fe-4S] cluster-binding site is contributed by Cys12. Residues His41 and His74 each contribute to the (2E)-4-hydroxy-3-methylbut-2-enyl diphosphate site. Dimethylallyl diphosphate-binding residues include His41 and His74. The isopentenyl diphosphate site is built by His41 and His74. Cys96 serves as a coordination point for [4Fe-4S] cluster. His124 is a (2E)-4-hydroxy-3-methylbut-2-enyl diphosphate binding site. His124 contacts dimethylallyl diphosphate. Residue His124 participates in isopentenyl diphosphate binding. The active-site Proton donor is the Glu126. Thr167 lines the (2E)-4-hydroxy-3-methylbut-2-enyl diphosphate pocket. Cys197 is a [4Fe-4S] cluster binding site. Positions 225, 226, 227, and 269 each coordinate (2E)-4-hydroxy-3-methylbut-2-enyl diphosphate. Positions 225, 226, 227, and 269 each coordinate dimethylallyl diphosphate. Isopentenyl diphosphate is bound by residues Ser225, Ser226, Asn227, and Ser269.

This sequence belongs to the IspH family. [4Fe-4S] cluster is required as a cofactor.

It carries out the reaction isopentenyl diphosphate + 2 oxidized [2Fe-2S]-[ferredoxin] + H2O = (2E)-4-hydroxy-3-methylbut-2-enyl diphosphate + 2 reduced [2Fe-2S]-[ferredoxin] + 2 H(+). The catalysed reaction is dimethylallyl diphosphate + 2 oxidized [2Fe-2S]-[ferredoxin] + H2O = (2E)-4-hydroxy-3-methylbut-2-enyl diphosphate + 2 reduced [2Fe-2S]-[ferredoxin] + 2 H(+). The protein operates within isoprenoid biosynthesis; dimethylallyl diphosphate biosynthesis; dimethylallyl diphosphate from (2E)-4-hydroxy-3-methylbutenyl diphosphate: step 1/1. It participates in isoprenoid biosynthesis; isopentenyl diphosphate biosynthesis via DXP pathway; isopentenyl diphosphate from 1-deoxy-D-xylulose 5-phosphate: step 6/6. In terms of biological role, catalyzes the conversion of 1-hydroxy-2-methyl-2-(E)-butenyl 4-diphosphate (HMBPP) into a mixture of isopentenyl diphosphate (IPP) and dimethylallyl diphosphate (DMAPP). Acts in the terminal step of the DOXP/MEP pathway for isoprenoid precursor biosynthesis. The sequence is that of 4-hydroxy-3-methylbut-2-enyl diphosphate reductase from Tolumonas auensis (strain DSM 9187 / NBRC 110442 / TA 4).